Consider the following 598-residue polypeptide: Elongation factor 4 (598 aa).

The tr-type G domain maps to 2–184; it reads NNIRNFAIIA…AIVTKLPAPQ (183 aa). GTP-binding positions include 14–19 and 131–134; these read DHGKST and NKVD.

Belongs to the TRAFAC class translation factor GTPase superfamily. Classic translation factor GTPase family. LepA subfamily.

It localises to the cell membrane. The enzyme catalyses GTP + H2O = GDP + phosphate + H(+). In terms of biological role, required for accurate and efficient protein synthesis under certain stress conditions. May act as a fidelity factor of the translation reaction, by catalyzing a one-codon backward translocation of tRNAs on improperly translocated ribosomes. Back-translocation proceeds from a post-translocation (POST) complex to a pre-translocation (PRE) complex, thus giving elongation factor G a second chance to translocate the tRNAs correctly. Binds to ribosomes in a GTP-dependent manner. The sequence is that of Elongation factor 4 from Wolbachia pipientis subsp. Culex pipiens (strain wPip).